Consider the following 133-residue polypeptide: Ribonuclease P protein component (133 aa).

Belongs to the RnpA family. As to quaternary structure, consists of a catalytic RNA component (M1 or rnpB) and a protein subunit.

It carries out the reaction Endonucleolytic cleavage of RNA, removing 5'-extranucleotides from tRNA precursor.. Its function is as follows. RNaseP catalyzes the removal of the 5'-leader sequence from pre-tRNA to produce the mature 5'-terminus. It can also cleave other RNA substrates such as 4.5S RNA. The protein component plays an auxiliary but essential role in vivo by binding to the 5'-leader sequence and broadening the substrate specificity of the ribozyme. In Corynebacterium efficiens (strain DSM 44549 / YS-314 / AJ 12310 / JCM 11189 / NBRC 100395), this protein is Ribonuclease P protein component.